The following is a 555-amino-acid chain: Zinc finger and SCAN domain-containing protein 21 (555 aa).

4 disordered regions span residues 1–74, 102–133, 204–243, and 263–354; these read MTKV…SKDK, TIKAEEDDEKDKGHPSPEISRQRFRQFGYHDT, LDEPGLQVSSPPNEQKQSWEKMSTSGTAMESLSSTETQHV, and EEVF…RPAP. 3 tandem repeats follow at residues 18–56, 57–95, and 96–134. Residues 18 to 134 form a 3 X 39 AA approximate tandem repeats region; sequence ESMGPSPIKV…FRQFGYHDTP (117 aa). Lys26 is covalently cross-linked (Glycyl lysine isopeptide (Lys-Gly) (interchain with G-Cter in SUMO2)). In terms of domain architecture, SCAN box spans 122–204; sequence RQRFRQFGYH…TLLEDLEQEL (83 aa). The span at 210-240 shows a compositional bias: polar residues; that stretch reads QVSSPPNEQKQSWEKMSTSGTAMESLSSTET. Positions 280–302 are enriched in basic and acidic residues; it reads PQKEDSADEHRSSEEESHADGLK. Residues Lys302 and Lys313 each participate in a glycyl lysine isopeptide (Lys-Gly) (interchain with G-Cter in SUMO2) cross-link. Positions 316 to 332 are enriched in basic and acidic residues; it reads SRSERQWANNLERERGT. 7 C2H2-type zinc fingers span residues 359-381, 387-409, 415-436, 442-464, 470-492, 498-520, and 526-548; these read YICAECGKAFSNSSNLTKHRRTH, YVCTKCGKAFSHSSNLTLHYRTH, YDCKCGKAFGQSSDLLKHQRMH, YQCKDCGKAFSGKGSLIRHYRIH, YQCNECGKSFSQHAGLSSHQRLH, YKCKECGKAFNHSSNFNKHHRIH, and YWCSHCGKTFCSKSNLSKHQRVH. Lys431 is covalently cross-linked (Glycyl lysine isopeptide (Lys-Gly) (interchain with G-Cter in SUMO2)).

The protein belongs to the krueppel C2H2-type zinc-finger protein family. In terms of tissue distribution, expressed predominantly in the spermatocytes and spermatids of adult testes. It is also present at lower levels in the ovary, brain, spleen, embryo and fetus.

It localises to the nucleus. Its function is as follows. Strong transcriptional activator. Plays an important role in spermatogenesis; essential for the progression of meiotic prophase I in spermatocytes. In Mus musculus (Mouse), this protein is Zinc finger and SCAN domain-containing protein 21 (Zscan21).